Reading from the N-terminus, the 495-residue chain is MTGNLVTKNSLTPDVRNGIDFKIADLSLADFGRKELRIAEHEMPGLMSLRREYAEVQPLKGARISGSLHMTVQTAVLIETLTALGAEVRWASCNIFSTQDHAAAAVVVGPHGTPDEPKGVPVFAWKGETLEEYWWAAEQMLTWPDPDKPANMILDDGGDATMLVLRGMQYEKAGVVPPAEEDDPAEWKIFLNLLRTRFETDKDKWTKIAESVKGVTEETTTGVLRLYQFAAAGDLAFPAINVNDSVTKSKFDNKYGTRHSLIDGINRGTDALIGGKKVLICGYGDVGKGCAEAMKGQGARVSVTEIDPINALQAMMEGFDVVTVEEAIGDADIVVTATGNKDIIMLEHIKAMKDHAILGNIGHFDNEIDMAGLERSGATRVNVKPQVDLWTFGDTGRSIIVLSEGRLLNLGNATGHPSFVMSNSFANQTIAQIELWTKNDEYDNEVYRLPKHLDEKVARIHVEALGGHLTKLTKEQAEYLGVDVEGPYKPDHYRY.

The substrate site is built by Thr-71, Asp-156, and Glu-218. An NAD(+)-binding site is contributed by 219 to 221 (TTT). Residues Lys-248 and Asp-252 each coordinate substrate. NAD(+) is bound by residues Asn-253, 282 to 287 (GYGDVG), Glu-305, Asn-340, 361 to 363 (IGH), and Asn-409.

The protein belongs to the adenosylhomocysteinase family. Requires NAD(+) as cofactor.

The protein resides in the cytoplasm. The catalysed reaction is S-adenosyl-L-homocysteine + H2O = L-homocysteine + adenosine. The protein operates within amino-acid biosynthesis; L-homocysteine biosynthesis; L-homocysteine from S-adenosyl-L-homocysteine: step 1/1. Functionally, may play a key role in the regulation of the intracellular concentration of adenosylhomocysteine. This Mycobacterium bovis (strain ATCC BAA-935 / AF2122/97) protein is Adenosylhomocysteinase.